Here is a 392-residue protein sequence, read N- to C-terminus: MALKLLGFNQDATCFSVISSNKGVTIYNCDPFGKCFELEKSTSNDEELDFLVEMLFSTSLIAVVDKTIGASKRKKLKIVNTKRKATICELTFPHEIMDVIMNRKIICVVLKSDQIFVYDISCMKLLRTIDVRGEKLKSTSKFRNSEAVGDIGVRVSLSTDNNSILCYSSYSKSDKENAPLNDIVVFDALKCIQINVLPAVHQSNIVCIACSPDGMLMATASEKGTIIRVFKTIDTENDEPILVNEFRRGSRPSRISEMKFNHDNTLLACVGESDTIHIFALPVTTTEADANEDDTLQQSSHSLSSSINGLQYISKGLANRFGKIIVSKIPTQSQQRHVAYIKIPENAKYRIGFPKDTTNTIHICGEDGNYLVYSIPRNEVGPCTLVKSNTFD.

WD repeat units follow at residues 200 to 240 (VHQS…NDEP) and 250 to 289 (SRPS…TEAD). A L/FRRG motif motif is present at residues 246–250 (FRRGS).

It belongs to the WD repeat PROPPIN family.

It is found in the cytoplasm. The protein localises to the membrane. Its subcellular location is the vacuole membrane. Required for cytoplasm to vacuole transport (Cvt) vesicles formation and mitophagy. Involved in binding of phosphatidylethanolamine to ATG8 and in recruitment of ATG8 and ATG5 to the pre-autophagosomal structure. Protects ATG8 from ARG4-mediated cleavage. The sequence is that of Autophagy-related protein 21 (ATG21) from Kluyveromyces lactis (strain ATCC 8585 / CBS 2359 / DSM 70799 / NBRC 1267 / NRRL Y-1140 / WM37) (Yeast).